The following is a 272-amino-acid chain: Short-chain dehydrogenase reductase ATA1 (272 aa).

14 to 38 is an NADP(+) binding site; the sequence is IITGGARGIGAATARLFTENGAYVI. Ser-143 serves as a coordination point for substrate. The active-site Proton acceptor is the Tyr-156. Lys-160 contacts NADP(+).

Belongs to the short-chain dehydrogenases/reductases (SDR) family. Expressed specifically in tapetal cells.

In terms of biological role, may play a role in tapetum development. The protein is Short-chain dehydrogenase reductase ATA1 of Arabidopsis thaliana (Mouse-ear cress).